The chain runs to 80 residues: Cell division activator CedA (80 aa).

Belongs to the CedA family.

Its function is as follows. Activates the cell division inhibited by chromosomal DNA over-replication. The protein is Cell division activator CedA of Escherichia coli O139:H28 (strain E24377A / ETEC).